A 445-amino-acid polypeptide reads, in one-letter code: Tubulin beta-2 chain (445 aa).

Gln11, Glu69, Ser138, Gly142, Thr143, Gly144, Asn204, and Asn226 together coordinate GTP. Glu69 is a Mg(2+) binding site. A disordered region spans residues 424-445 (QYQDATAEDEGEFDEDEEVEEA). Positions 429–445 (TAEDEGEFDEDEEVEEA) are enriched in acidic residues.

Belongs to the tubulin family. Dimer of alpha and beta chains. A typical microtubule is a hollow water-filled tube with an outer diameter of 25 nm and an inner diameter of 15 nM. Alpha-beta heterodimers associate head-to-tail to form protofilaments running lengthwise along the microtubule wall with the beta-tubulin subunit facing the microtubule plus end conferring a structural polarity. Microtubules usually have 13 protofilaments but different protofilament numbers can be found in some organisms and specialized cells. Requires Mg(2+) as cofactor.

It is found in the cytoplasm. The protein localises to the cytoskeleton. Functionally, tubulin is the major constituent of microtubules, a cylinder consisting of laterally associated linear protofilaments composed of alpha- and beta-tubulin heterodimers. Microtubules grow by the addition of GTP-tubulin dimers to the microtubule end, where a stabilizing cap forms. Below the cap, tubulin dimers are in GDP-bound state, owing to GTPase activity of alpha-tubulin. The chain is Tubulin beta-2 chain (TUB-2) from Echinococcus multilocularis (Fox tapeworm).